A 194-amino-acid chain; its full sequence is Glycerol-3-phosphate acyltransferase 2 (194 aa).

A run of 5 helical transmembrane segments spans residues 1–21, 64–84, 112–132, 135–155, and 156–173; these read MWLL…AYVV, VLAV…LAAL, LAMA…VVIF, YISL…IYFH, and RPWP…LVIY.

Belongs to the PlsY family. In terms of assembly, probably interacts with PlsX.

It is found in the cell membrane. It catalyses the reaction an acyl phosphate + sn-glycerol 3-phosphate = a 1-acyl-sn-glycero-3-phosphate + phosphate. It participates in lipid metabolism; phospholipid metabolism. In terms of biological role, catalyzes the transfer of an acyl group from acyl-phosphate (acyl-PO(4)) to glycerol-3-phosphate (G3P) to form lysophosphatidic acid (LPA). This enzyme utilizes acyl-phosphate as fatty acyl donor, but not acyl-CoA or acyl-ACP. The chain is Glycerol-3-phosphate acyltransferase 2 from Moorella thermoacetica (strain ATCC 39073 / JCM 9320).